Here is a 558-residue protein sequence, read N- to C-terminus: Undecaprenyl phosphate-alpha-4-amino-4-deoxy-L-arabinose arabinosyl transferase 1 (558 aa).

The next 12 helical transmembrane spans lie at 4-24, 87-107, 115-135, 136-156, 178-198, 207-227, 257-277, 295-315, 316-336, 355-375, 383-403, and 411-431; these read GAGL…LVPL, FASV…SWTV, LLAA…TYSV, LDPM…FALR, FMTK…PVAL, LGYG…WALA, APFW…LGLL, FLLL…KGKL, LTYI…YGRE, AFAL…LPWA, WPRI…AAVS, and WALA…IIPQ.

This sequence belongs to the glycosyltransferase 83 family.

It is found in the cell inner membrane. The catalysed reaction is 4-amino-4-deoxy-alpha-L-arabinopyranosyl di-trans,octa-cis-undecaprenyl phosphate + lipid IVA = lipid IIA + di-trans,octa-cis-undecaprenyl phosphate.. It functions in the pathway lipopolysaccharide metabolism; 4-amino-4-deoxy-beta-L-arabinose-lipid A biosynthesis. Functionally, catalyzes the transfer of the L-Ara4N moiety of the glycolipid undecaprenyl phosphate-alpha-L-Ara4N to lipid A. The modified arabinose is attached to lipid A and is required for resistance to polymyxin and cationic antimicrobial peptides. The polypeptide is Undecaprenyl phosphate-alpha-4-amino-4-deoxy-L-arabinose arabinosyl transferase 1 (Sodalis glossinidius (strain morsitans)).